The sequence spans 158 residues: Cyclic pyranopterin monophosphate synthase (158 aa).

Residues 75–77 (LCH) and 113–114 (ME) contribute to the substrate site. Residue D128 is part of the active site.

It belongs to the MoaC family. In terms of assembly, homohexamer; trimer of dimers.

It catalyses the reaction (8S)-3',8-cyclo-7,8-dihydroguanosine 5'-triphosphate = cyclic pyranopterin phosphate + diphosphate. It participates in cofactor biosynthesis; molybdopterin biosynthesis. In terms of biological role, catalyzes the conversion of (8S)-3',8-cyclo-7,8-dihydroguanosine 5'-triphosphate to cyclic pyranopterin monophosphate (cPMP). This Histophilus somni (strain 2336) (Haemophilus somnus) protein is Cyclic pyranopterin monophosphate synthase.